The sequence spans 424 residues: MKPQWQQYINIIKQVVKPALGCTEPIAAAYAAAVARALLGVEPDSIAVQVSDNLYKNSMGVFVPGTGKIGLAIAAAAGAIAGNPDAGLEVLAVITPEQVAKAQALIDAGKVTVERTETAEFIYCCVIAKKGDREALVKICGGHTLIAEKRLNGESVFSVDSTQAKATGSICEGVDITIESIYRFAQEVPFEEIKFILEASELNGKLSDEGMANPYGLEVGRTMKSGIAAGIIGEDLLNKIVMLTAAASDARMGGANLPAMSNLGSGNQGIAATIPVVLTAQCYKVSEEQLARALIMSHLGAIYIKSHYPPLSAFCGNTVTSAAASMAMVYLAGGSFEQSCFAIQNVISDSSGMVCDGAKASCAMKVSTSSSAAVRSFLMALSSHNVSGQGIIATDVEKTIKNIGKMILNGMSSTDVTIIDIMSA.

Belongs to the UPF0597 family.

The sequence is that of UPF0597 protein Sbal_3070 from Shewanella baltica (strain OS155 / ATCC BAA-1091).